The following is a 441-amino-acid chain: Thymidine phosphorylase (441 aa).

This sequence belongs to the thymidine/pyrimidine-nucleoside phosphorylase family. As to quaternary structure, homodimer.

The catalysed reaction is thymidine + phosphate = 2-deoxy-alpha-D-ribose 1-phosphate + thymine. It participates in pyrimidine metabolism; dTMP biosynthesis via salvage pathway; dTMP from thymine: step 1/2. In terms of biological role, the enzymes which catalyze the reversible phosphorolysis of pyrimidine nucleosides are involved in the degradation of these compounds and in their utilization as carbon and energy sources, or in the rescue of pyrimidine bases for nucleotide synthesis. The chain is Thymidine phosphorylase from Chromobacterium violaceum (strain ATCC 12472 / DSM 30191 / JCM 1249 / CCUG 213 / NBRC 12614 / NCIMB 9131 / NCTC 9757 / MK).